The primary structure comprises 328 residues: Cytochrome c biogenesis protein CcsA (328 aa).

Helical transmembrane passes span 12–32 (HISF…LLLG), 45–65 (GMII…IFSG), 72–92 (LYES…VLCL), 100–120 (FNTI…SGLL), 145–165 (MILG…ILVI), 234–254 (TISL…VWAN), 263–283 (WDPK…YLHI), and 296–316 (IVAS…NLLG).

The protein belongs to the CcmF/CycK/Ccl1/NrfE/CcsA family. In terms of assembly, may interact with Ccs1.

It localises to the plastid. The protein localises to the chloroplast thylakoid membrane. In terms of biological role, required during biogenesis of c-type cytochromes (cytochrome c6 and cytochrome f) at the step of heme attachment. The polypeptide is Cytochrome c biogenesis protein CcsA (Phaseolus vulgaris (Kidney bean)).